The sequence spans 316 residues: Ribose-phosphate pyrophosphokinase (316 aa).

Residues 39–41 (DGE) and 98–99 (RQ) each bind ATP. Residues His133 and Asp172 each contribute to the Mg(2+) site. Residue Lys195 is part of the active site. D-ribose 5-phosphate is bound by residues Arg197, Asp221, and 225–229 (DTGGT).

This sequence belongs to the ribose-phosphate pyrophosphokinase family. Class I subfamily. As to quaternary structure, homohexamer. Mg(2+) serves as cofactor.

It localises to the cytoplasm. The enzyme catalyses D-ribose 5-phosphate + ATP = 5-phospho-alpha-D-ribose 1-diphosphate + AMP + H(+). It functions in the pathway metabolic intermediate biosynthesis; 5-phospho-alpha-D-ribose 1-diphosphate biosynthesis; 5-phospho-alpha-D-ribose 1-diphosphate from D-ribose 5-phosphate (route I): step 1/1. Involved in the biosynthesis of the central metabolite phospho-alpha-D-ribosyl-1-pyrophosphate (PRPP) via the transfer of pyrophosphoryl group from ATP to 1-hydroxyl of ribose-5-phosphate (Rib-5-P). This Ralstonia nicotianae (strain ATCC BAA-1114 / GMI1000) (Ralstonia solanacearum) protein is Ribose-phosphate pyrophosphokinase.